A 252-amino-acid chain; its full sequence is Putative pinene synthase (252 aa).

The protein belongs to the terpene synthase family. Tpsa subfamily.

This chain is Putative pinene synthase, found in Fragaria ananassa (Strawberry).